The chain runs to 306 residues: Curved DNA-binding protein (306 aa).

The 65-residue stretch at 5–69 (DYYAIMGVKP…QRRAEYDQMW (65 aa)) folds into the J domain.

The protein localises to the cytoplasm. Its subcellular location is the nucleoid. Its function is as follows. DNA-binding protein that preferentially recognizes a curved DNA sequence. It is probably a functional analog of DnaJ; displays overlapping activities with DnaJ, but functions under different conditions, probably acting as a molecular chaperone in an adaptive response to environmental stresses other than heat shock. Lacks autonomous chaperone activity; binds native substrates and targets them for recognition by DnaK. Its activity is inhibited by the binding of CbpM. This chain is Curved DNA-binding protein, found in Shigella dysenteriae serotype 1 (strain Sd197).